Reading from the N-terminus, the 188-residue chain is Probable manganese efflux pump MntP (188 aa).

The next 5 helical transmembrane spans lie at 3–23 (ITAT…ASIG), 66–86 (LEWN…RMII), 106–128 (WLLV…GLAF), 143–163 (ATLI…SIIG), and 168–188 (ILGG…HFHG).

This sequence belongs to the MntP (TC 9.B.29) family.

It localises to the cell inner membrane. In terms of biological role, probably functions as a manganese efflux pump. In Escherichia coli O7:K1 (strain IAI39 / ExPEC), this protein is Probable manganese efflux pump MntP.